We begin with the raw amino-acid sequence, 598 residues long: MEHNTDISTTQYNSHTVSTTTLSSFLVNVVTSSKRGNKMTTITAQPPRDEVEPAVPAPQLLSSDSASELSPKAEKFQPGWRFIAAFLSLCIIVLMAALDATSISVALPSMARALGGSAIEAFWAGTSFLLTSTIFQPVLGSFSHIFGRKSLIYISLVFFLAGSIIPAVANNFTTILVGRSIQGVGGGGIIALTEMVVVDTVPLRERGKWFSFFGMMWSFGTVAGPLIGGAFAQKVSWRWVFWINLPFLGIGTVLITVFLKLNQRHGEFLARLREVDWIGMVLFLGSTTGFLIPITWGGVQYPWDSWRTLVPLIVSAAGIVAFIVHQEKFAPHPLIRTSVFKNKSAALLYLTTVIHGIILWAILYFMPLYFEAVKGMGPIMAGVALFPWTFTVAPGAVATGIAIAVTGKYRWANWAGWFLATLGSGLLILLKPDTSTPAWIFLNLVGGIGTGILFPAMALAVQASASVKDQAYAANMFSFFRAFGQTLGVAIGGVVFQNQMKAKLLTYPLLADMADTYSKDAAGLVEIIKGMPAGLMKDQLKESYTDALKYIWIVATVLAGVSLVATLFIDEFDMDIEMDTERGFKEKSKVKDAEKETH.

Helical transmembrane passes span 83–103 (IAAFLSLCIIVLMAALDATSI), 122–142 (FWAGTSFLLTSTIFQPVLGSF), and 150–170 (SLIYISLVFFLAGSIIPAVAN). An N-linked (GlcNAc...) asparagine glycan is attached at Asn171. Helical transmembrane passes span 183 to 203 (GVGGGGIIALTEMVVVDTVPL), 212 to 232 (FFGMMWSFGTVAGPLIGGAFA), 239 to 259 (WVFWINLPFLGIGTVLITVFL), 277 to 297 (WIGMVLFLGSTTGFLIPITWG), and 309 to 329 (LVPLIVSAAGIVAFIVHQEKF). A glycan (N-linked (GlcNAc...) asparagine) is linked at Asn342. A run of 6 helical transmembrane segments spans residues 346–366 (ALLYLTTVIHGIILWAILYFM), 383–403 (VALFPWTFTVAPGAVATGIAI), 411–431 (WANWAGWFLATLGSGLLILLK), 439–459 (WIFLNLVGGIGTGILFPAMAL), 476–496 (MFSFFRAFGQTLGVAIGGVVF), and 550–570 (YIWIVATVLAGVSLVATLFID).

The protein belongs to the major facilitator superfamily.

The protein localises to the membrane. Its function is as follows. MFS transporter; part of the gene cluster that mediates the biosynthesis of squalestatin S1 (SQS1, also known as zaragozic acid A), a lead compound for the treatment of hyper-cholesterolemia by targeting squalene synthase (SS). The protein is MFS transporter L2 of Phoma sp. (strain ATCC 20986 / MF5453).